The chain runs to 458 residues: Ribulose bisphosphate carboxylase large chain (458 aa).

Lysine 7 carries the N6,N6,N6-trimethyllysine modification. Positions 116 and 166 each coordinate substrate. Residue lysine 168 is the Proton acceptor of the active site. Lysine 170 provides a ligand contact to substrate. Positions 194, 196, and 197 each coordinate Mg(2+). Lysine 194 carries the post-translational modification N6-carboxylysine. Histidine 287 (proton acceptor) is an active-site residue. The substrate site is built by arginine 288, histidine 320, and serine 372.

Belongs to the RuBisCO large chain family. Type I subfamily. As to quaternary structure, heterohexadecamer of 8 large chains and 8 small chains; disulfide-linked. The disulfide link is formed within the large subunit homodimers. Requires Mg(2+) as cofactor. Post-translationally, the disulfide bond which can form in the large chain dimeric partners within the hexadecamer appears to be associated with oxidative stress and protein turnover.

The protein localises to the plastid. It localises to the chloroplast. It carries out the reaction 2 (2R)-3-phosphoglycerate + 2 H(+) = D-ribulose 1,5-bisphosphate + CO2 + H2O. The catalysed reaction is D-ribulose 1,5-bisphosphate + O2 = 2-phosphoglycolate + (2R)-3-phosphoglycerate + 2 H(+). Functionally, ruBisCO catalyzes two reactions: the carboxylation of D-ribulose 1,5-bisphosphate, the primary event in carbon dioxide fixation, as well as the oxidative fragmentation of the pentose substrate in the photorespiration process. Both reactions occur simultaneously and in competition at the same active site. This Gladiolus gueinzii (Coastal gladiolus) protein is Ribulose bisphosphate carboxylase large chain.